Consider the following 236-residue polypeptide: 2-C-methyl-D-erythritol 4-phosphate cytidylyltransferase (236 aa).

The protein belongs to the IspD/TarI cytidylyltransferase family. IspD subfamily. Homodimer.

It catalyses the reaction 2-C-methyl-D-erythritol 4-phosphate + CTP + H(+) = 4-CDP-2-C-methyl-D-erythritol + diphosphate. It functions in the pathway isoprenoid biosynthesis; isopentenyl diphosphate biosynthesis via DXP pathway; isopentenyl diphosphate from 1-deoxy-D-xylulose 5-phosphate: step 2/6. In terms of biological role, catalyzes the formation of 4-diphosphocytidyl-2-C-methyl-D-erythritol from CTP and 2-C-methyl-D-erythritol 4-phosphate (MEP). The polypeptide is 2-C-methyl-D-erythritol 4-phosphate cytidylyltransferase (Escherichia fergusonii (strain ATCC 35469 / DSM 13698 / CCUG 18766 / IAM 14443 / JCM 21226 / LMG 7866 / NBRC 102419 / NCTC 12128 / CDC 0568-73)).